Consider the following 171-residue polypeptide: Plastocyanin minor isoform, chloroplastic (171 aa).

The 99-residue stretch at 73 to 171 (MEVLLGSDDG…AGMVGKLTVK (99 aa)) folds into the Plastocyanin-like domain. Histidine 109, cysteine 156, histidine 159, and methionine 164 together coordinate Cu cation.

It belongs to the plastocyanin family. Cu(2+) serves as cofactor.

It localises to the plastid. The protein localises to the chloroplast thylakoid membrane. Functionally, participates in electron transfer between P700 and the cytochrome b6-f complex in photosystem I. Seems to be a minor plastocyanin in Arabidopsis. The chain is Plastocyanin minor isoform, chloroplastic (PETE) from Arabidopsis thaliana (Mouse-ear cress).